Reading from the N-terminus, the 186-residue chain is Elongation factor P (186 aa).

It belongs to the elongation factor P family.

It localises to the cytoplasm. It functions in the pathway protein biosynthesis; polypeptide chain elongation. Its function is as follows. Involved in peptide bond synthesis. Stimulates efficient translation and peptide-bond synthesis on native or reconstituted 70S ribosomes in vitro. Probably functions indirectly by altering the affinity of the ribosome for aminoacyl-tRNA, thus increasing their reactivity as acceptors for peptidyl transferase. This chain is Elongation factor P, found in Shewanella piezotolerans (strain WP3 / JCM 13877).